The following is a 1409-amino-acid chain: MLFNKCIIISINLDFSNKEKCMTKPYSIGLDIGTNSVGWAVITDNYKVPSKKMKVLGNTSKKYIKKNLLGVLLFDSGITAEGRRLKRTARRRYTRRRNRILYLQEIFSTEMATLDDAFFQRLDDSFLVPDDKRDSKYPIFGNLVEEKVYHDEFPTIYHLRKYLADSTKKADLRLVYLALAHMIKYRGHFLIEGEFNSKNNDIQKNFQDFLDTYNAIFESDLSLENSKQLEEIVKDKISKLEKKDRILKLFPGEKNSGIFSEFLKLIVGNQADFRKCFNLDEKASLHFSKESYDEDLETLLGYIGDDYSDVFLKAKKLYDAILLSGFLTVTDNETEAPLSSAMIKRYNEHKEDLALLKEYIRNISLKTYNEVFKDDTKNGYAGYIDGKTNQEDFYVYLKNLLAEFEGADYFLEKIDREDFLRKQRTFDNGSIPYQIHLQEMRAILDKQAKFYPFLAKNKERIEKILTFRIPYYVGPLARGNSDFAWSIRKRNEKITPWNFEDVIDKESSAEAFINRMTSFDLYLPEEKVLPKHSLLYETFNVYNELTKVRFIAESMRDYQFLDSKQKKDIVRLYFKDKRKVTDKDIIEYLHAIYGYDGIELKGIEKQFNSSLSTYHDLLNIINDKEFLDDSSNEAIIEEIIHTLTIFEDREMIKQRLSKFENIFDKSVLKKLSRRHYTGWGKLSAKLINGIRDEKSGNTILDYLIDDGISNRNFMQLIHDDALSFKKKIQKAQIIGDEDKGNIKEVVKSLPGSPAIKKGILQSIKIVDELVKVMGGRKPESIVVEMARENQYTNQGKSNSQQRLKRLEKSLKELGSKILKENIPAKLSKIDNNALQNDRLYLYYLQNGKDMYTGDDLDIDRLSNYDIDHIIPQAFLKDNSIDNKVLVSSASNRGKSDDFPSLEVVKKRKTFWYQLLKSKLISQRKFDNLTKAERGGLLPEDKAGFIQRQLVETRQITKHVARLLDEKFNNKKDENNRAVRTVKIITLKSTLVSQFRKDFELYKVREINDFHHAHDAYLNAVIASALLKKYPKLEPEFVYGDYPKYNSFRERKSATEKVYFYSNIMNIFKKSISLADGRVIERPLIEVNEETGESVWNKESDLATVRRVLSYPQVNVVKKVEEQNHGLDRGKPKGLFNANLSSKPKPNSNENLVGAKEYLDPKKYGGYAGISNSFAVLVKGTIEKGAKKKITNVLEFQGISILDRINYRKDKLNFLLEKGYKDIELIIELPKYSLFELSDGSRRMLASILSTNNKRGEIHKGNQIFLSQKFVKLLYHAKRISNTINENHRKYVENHKKEFEELFYYILEFNENYVGAKKNGKLLNSAFQSWQNHSIDELCSSFIGPTGSERKGLFELTSRGSAADFEFLGVKIPRYRDYTPSSLLKDATLIHQSVTGLYETRIDLAKLGEG.

Asp-31 (for RuvC-like nuclease domain) is an active-site residue. Residues Asp-31, Glu-784, and Glu-788 each contribute to the Mg(2+) site. In terms of domain architecture, HNH Cas9-type spans 792-949; that stretch reads TNQGKSNSQQ…DKAGFIQRQL (158 aa). The active-site Proton acceptor for HNH nuclease domain is the His-868. His-1011 serves as a coordination point for Mg(2+). Positions 1121 to 1130 are enriched in basic and acidic residues; that stretch reads EQNHGLDRGK. Residues 1121–1151 are disordered; it reads EQNHGLDRGKPKGLFNANLSSKPKPNSNENL. The span at 1137 to 1150 shows a compositional bias: polar residues; sequence ANLSSKPKPNSNEN.

It belongs to the CRISPR-associated protein Cas9 family. Subtype II-A subfamily. As to quaternary structure, monomer. Binds crRNA and tracrRNA. Requires Mg(2+) as cofactor.

Only has nuclease activity when bound to both gRNAs (crRNA plus tracrRNA). Its function is as follows. CRISPR (clustered regularly interspaced short palindromic repeat) is an adaptive immune system that provides protection against mobile genetic elements (viruses, transposable elements and conjugative plasmids). CRISPR clusters contain spacers, sequences complementary to antecedent mobile elements, and target invading nucleic acids. CRISPR clusters are transcribed and processed into CRISPR RNA (crRNA). In type II CRISPR systems correct processing of pre-crRNA requires a trans-encoded small RNA (tracrRNA), endogenous ribonuclease 3 (rnc) and Cas9. The tracrRNA serves as a guide for ribonuclease 3-aided processing of pre-crRNA. Cas9/crRNA/tracrRNA endonucleolytically cleaves linear or circular dsDNA target complementary to the spacer yielding blunt ends; Cas9 is inactive in the absence of the 2 guide RNAs (gRNA). Cas9 recognizes a 3'-G-rich protospacer adjacent motif (PAM, TGGTG in this organism) in the CRISPR repeat sequences to help distinguish self versus nonself, as targets within the bacterial CRISPR locus do not have PAMs. PAM recognition is also required for catalytic activity. When the CRISPR3/cas system consisting of cas9-cas1-cas2-csn2-CRISPR3 or just cas9-CRISPR3 is expressed in E.coli it prevents plasmids homologous to spacers 1 or 2 from transforming. The sequence is that of CRISPR-associated endonuclease Cas9 from Streptococcus thermophilus.